We begin with the raw amino-acid sequence, 182 residues long: Large ribosomal subunit protein uL6 (182 aa).

The protein belongs to the universal ribosomal protein uL6 family. As to quaternary structure, part of the 50S ribosomal subunit.

In terms of biological role, this protein binds to the 23S rRNA, and is important in its secondary structure. It is located near the subunit interface in the base of the L7/L12 stalk, and near the tRNA binding site of the peptidyltransferase center. This Dehalococcoides mccartyi (strain ATCC BAA-2100 / JCM 16839 / KCTC 5957 / BAV1) protein is Large ribosomal subunit protein uL6.